Consider the following 344-residue polypeptide: N-acetyl-gamma-glutamyl-phosphate reductase (344 aa).

Cys-149 is an active-site residue.

The protein belongs to the NAGSA dehydrogenase family. Type 1 subfamily.

The protein resides in the cytoplasm. It carries out the reaction N-acetyl-L-glutamate 5-semialdehyde + phosphate + NADP(+) = N-acetyl-L-glutamyl 5-phosphate + NADPH + H(+). The protein operates within amino-acid biosynthesis; L-arginine biosynthesis; N(2)-acetyl-L-ornithine from L-glutamate: step 3/4. In terms of biological role, catalyzes the NADPH-dependent reduction of N-acetyl-5-glutamyl phosphate to yield N-acetyl-L-glutamate 5-semialdehyde. The sequence is that of N-acetyl-gamma-glutamyl-phosphate reductase from Halorhodospira halophila (strain DSM 244 / SL1) (Ectothiorhodospira halophila (strain DSM 244 / SL1)).